The sequence spans 572 residues: Putative lysozyme-like protein (572 aa).

The first 17 residues, 1–17, serve as a signal peptide directing secretion; the sequence is MRLLLVLLALIFSVVSA. Low complexity predominate over residues 145–165; that stretch reads MSSSGSSSSSGSSGSSSSSSG. Disordered stretches follow at residues 145–199, 231–297, 326–388, and 433–469; these read MSSS…HGGG, SSSS…GGGV, ANSV…GERK, and AGSS…GGSG. Residues 166–185 show a composition bias toward gly residues; sequence SSGGGSSGGGSGGGGGGSGL. Residues 231 to 240 are compositionally biased toward low complexity; sequence SSSSADAGSS. Over residues 258–282 the composition is skewed to gly residues; that stretch reads STGGTGGSSGSSGGGSGGGGGGSGL. Residues 326–358 show a composition bias toward low complexity; that stretch reads ANSVSSLAGSMSSSGSSSSSGSSGSSSSSSSSG. The span at 359 to 382 shows a compositional bias: gly residues; it reads SSGGSSGGGSSGGGSGGGGGGSGL. The span at 433–452 shows a compositional bias: low complexity; that stretch reads AGSSSSSGSSGSSSSSSSSG. Residues 453 to 469 are compositionally biased toward gly residues; it reads SSGGSSGGSSGGGGGSG.

This sequence belongs to the dictyostelium lysozyme family.

This chain is Putative lysozyme-like protein (alyL), found in Dictyostelium discoideum (Social amoeba).